A 1020-amino-acid chain; its full sequence is Neurofilament heavy polypeptide (1020 aa).

The head stretch occupies residues 1–100; it reads MMSFGGADAL…VATSRSEKEQ (100 aa). The interval 58–83 is disordered; that stretch reads VSASPSRFRGAGAASSTDSLDTLSNG. Polar residues predominate over residues 71 to 82; it reads ASSTDSLDTLSN. Phosphoserine is present on residues serine 76 and serine 124. The region spanning 97-413 is the IF rod domain; it reads EKEQLQALND…KLLEGEECRI (317 aa). The tract at residues 101–132 is coil 1A; it reads LQALNDRFAGYIDKVRQLEAHNRSLEGEAAAL. Residues 133 to 145 are linker 1; it reads RQQQAGRSAMGEL. The tract at residues 146-244 is coil 1B; that stretch reads YEREVREMRG…QEEVGELLGQ (99 aa). The interval 245–266 is linker 12; sequence IQGSGAAQAQMQAETRDALKCD. Residues 267–288 are coil 2A; that stretch reads VTSALREIRAQLEGHAVQSTLQ. The tract at residues 289 to 292 is linker 2; sequence SEEW. The tract at residues 293-413 is coil 2B; that stretch reads FRVRLDRLSE…KLLEGEECRI (121 aa). A phosphoserine mark is found at serine 347 and serine 421. The tail stretch occupies residues 414–1020; that stretch reads GFGPIPFSLP…ATEDKAAKGK (607 aa). Residues 456 to 1020 are disordered; the sequence is IVEEQTEETQ…ATEDKAAKGK (565 aa). 2 stretches are compositionally biased toward acidic residues: residues 459–475 and 483–498; these read EQTE…EEEE and GKEE…EGGE. Phosphoserine is present on residues serine 511, serine 526, serine 532, serine 540, serine 546, serine 552, serine 560, serine 566, serine 574, serine 580, serine 586, serine 594, serine 600, serine 606, serine 614, serine 620, serine 628, serine 634, serine 640, serine 648, serine 654, serine 662, serine 668, serine 676, serine 682, serine 690, serine 696, and serine 704. Residues 511-1020 show a composition bias toward basic and acidic residues; sequence SPEKEAKSPV…ATEDKAAKGK (510 aa). 4 repeat units span residues 525–530, 531–536, 539–544, and 545–550. Positions 525-826 are 30 X 6 AA repeats of K-S-P-[AEPV]-[EAK]-[AEVK]; that stretch reads KSPAEAKSPE…KEEVKSPVKE (302 aa). The stretch at 559–564 is repeat 5; sequence KSPPEA. 2 consecutive repeat copies span residues 573–578 and 579–584. 2 repeat units span residues 593-598 and 599-604. Repeat unit 10 spans residues 613–618; that stretch reads KSPAEA. 4 tandem repeats follow at residues 627 to 632, 633 to 638, 639 to 644, and 647 to 652. 12 tandem repeats follow at residues 661 to 666, 667 to 672, 675 to 680, 681 to 686, 689 to 694, 695 to 700, 703 to 708, 709 to 714, 717 to 722, 723 to 728, 737 to 742, and 745 to 750. A phosphoserine mark is found at serine 718, serine 724, and serine 738. Residues serine 752 and serine 763 each carry the phosphoserine modification. Repeat 27 spans residues 762-767; that stretch reads KSPEAK. Threonine 768 is subject to Phosphothreonine. 3 consecutive repeat copies span residues 786-791, 794-799, and 821-826. 4 positions are modified to phosphoserine: serine 787, serine 795, serine 822, and serine 888.

This sequence belongs to the intermediate filament family. As to quaternary structure, forms heterodimers with NEFL; which can further hetero-oligomerize (in vitro). Forms heterodimers with INA (in vitro). There are a number of repeats of the tripeptide K-S-P, NFH is phosphorylated on a number of the serines in this motif. It is thought that phosphorylation of NFH results in the formation of interfilament cross bridges that are important in the maintenance of axonal caliber. Post-translationally, phosphorylation seems to play a major role in the functioning of the larger neurofilament polypeptides (NF-M and NF-H), the levels of phosphorylation being altered developmentally and coincidentally with a change in the neurofilament function. In terms of processing, phosphorylated in the head and rod regions by the PKC kinase PKN1, leading to the inhibition of polymerization.

It localises to the cytoplasm. The protein resides in the cytoskeleton. Its subcellular location is the cell projection. The protein localises to the axon. In terms of biological role, neurofilaments usually contain three intermediate filament proteins: NEFL, NEFM, and NEFH which are involved in the maintenance of neuronal caliber. NEFH has an important function in mature axons that is not subserved by the two smaller NF proteins. May additionally cooperate with the neuronal intermediate filament proteins PRPH and INA to form neuronal filamentous networks. The protein is Neurofilament heavy polypeptide (NEFH) of Homo sapiens (Human).